The sequence spans 616 residues: UPF0329 protein ECU02_1540 (616 aa).

Composition is skewed to basic and acidic residues over residues 350–359 and 369–381; these read EREKREESKG and GAGE…KEED. Positions 350 to 427 are disordered; the sequence is EREKREESKG…RKGDGHHYKI (78 aa). Acidic residues predominate over residues 382–396; the sequence is GKEEEGVEAEEEESA. A compositionally biased stretch (basic residues) spans 408 to 427; sequence ARRKKSLKGKRKGDGHHYKI.

Belongs to the UPF0329 family.

The chain is UPF0329 protein ECU02_1540 from Encephalitozoon cuniculi (strain GB-M1) (Microsporidian parasite).